Here is a 156-residue protein sequence, read N- to C-terminus: Acyl carrier protein, mitochondrial (156 aa).

Residues 1–68 (MASRVLCACV…GTVTHLCRQY (68 aa)) constitute a mitochondrion transit peptide. The 76-residue stretch at 77–152 (DGIKDRVLYV…EIVDYIADKK (76 aa)) folds into the Carrier domain. K88 is modified (N6-acetyllysine). The residue at position 112 (S112) is an O-(pantetheine 4'-phosphoryl)serine.

This sequence belongs to the acyl carrier protein (ACP) family. Mammalian complex I is composed of 45 different subunits. Interacts with ETFRF1. Identified in a complex composed of MALSU1, MIEF1 upstream open reading frame protein and NDUFAB1; within the trimeric complex, MIEF1 upstream open reading frame protein functions as a bridging scaffold that interacts with MALSU1 on one side, and with NDUFAB1 on the other side. The complex interacts with the mitochondrial large ribosomal subunit. Interacts with alpha-1-microglobulin chain; this interaction is required for the maintenance of mitochondrial redox homeostasis. Component of the mitochondrial core iron-sulfur cluster (ISC) complex composed of NFS1, LYRM4, NDUFAB1, ISCU, FXN, and FDX2; this complex is a heterohexamer containing two copies of each monomer. Component of the cyteine desulfurase complex composed of NFS1, LYRM4 and NDUFAB1; this complex contributes to the stability and cysteine desulfurase activity of NFS1. In terms of processing, phosphopantetheinylation at Ser-112 is essential for interactions with LYR motif-containing proteins.

Its subcellular location is the mitochondrion. In terms of biological role, carrier of the growing fatty acid chain in fatty acid biosynthesis. Accessory and non-catalytic subunit of the mitochondrial membrane respiratory chain NADH dehydrogenase (Complex I), which functions in the transfer of electrons from NADH to the respiratory chain. Accessory protein, of the core iron-sulfur cluster (ISC) assembly complex, that regulates, in association with LYRM4, the stability and the cysteine desulfurase activity of NFS1 and participates in the [2Fe-2S] clusters assembly on the scaffolding protein ISCU. The core iron-sulfur cluster (ISC) assembly complex is involved in the de novo synthesis of a [2Fe-2S] cluster, the first step of the mitochondrial iron-sulfur protein biogenesis. This process is initiated by the cysteine desulfurase complex (NFS1:LYRM4:NDUFAB1) that produces persulfide which is delivered on the scaffold protein ISCU in a FXN-dependent manner. Then this complex is stabilized by FDX2 which provides reducing equivalents to accomplish the [2Fe-2S] cluster assembly. Finally, the [2Fe-2S] cluster is transferred from ISCU to chaperone proteins, including HSCB, HSPA9 and GLRX5. This is Acyl carrier protein, mitochondrial from Mus musculus (Mouse).